The sequence spans 976 residues: Vacuolar membrane protease (976 aa).

The Cytoplasmic segment spans residues methionine 1 to lysine 15. The chain crosses the membrane as a helical span at residues threonine 16 to aspartate 36. At histidine 37–leucine 359 the chain is on the vacuolar side. N-linked (GlcNAc...) asparagine glycans are attached at residues asparagine 96 and asparagine 121. Residues histidine 156 and aspartate 168 each coordinate Zn(2+). N-linked (GlcNAc...) asparagine glycosylation occurs at asparagine 189. The active-site Proton acceptor is glutamate 200. Glutamate 201 contacts Zn(2+). Asparagine 212 and asparagine 217 each carry an N-linked (GlcNAc...) asparagine glycan. Zn(2+)-binding residues include glutamate 226 and histidine 300. A helical transmembrane segment spans residues phenylalanine 360–isoleucine 380. The Cytoplasmic segment spans residues serine 381–tryptophan 392. Residues leucine 393 to phenylalanine 412 traverse the membrane as a helical segment. The Vacuolar portion of the chain corresponds to serine 413–tyrosine 428. The chain crosses the membrane as a helical span at residues phenylalanine 429 to cysteine 449. Topologically, residues serine 450 to serine 461 are cytoplasmic. The helical transmembrane segment at leucine 462–leucine 482 threads the bilayer. Over tyrosine 483–serine 496 the chain is Vacuolar. The helical transmembrane segment at isoleucine 497–methionine 517 threads the bilayer. Over arginine 518 to tyrosine 627 the chain is Cytoplasmic. Positions arginine 528–glutamate 610 are disordered. Polar residues predominate over residues asparagine 549 to threonine 558. The span at serine 559–aspartate 570 shows a compositional bias: low complexity. A compositionally biased stretch (basic and acidic residues) spans asparagine 582 to proline 601. Residues alanine 628–valine 648 traverse the membrane as a helical segment. At aspartate 649–aspartate 668 the chain is on the vacuolar side. The N-linked (GlcNAc...) asparagine glycan is linked to asparagine 656. The helical transmembrane segment at valine 669 to tyrosine 689 threads the bilayer. Residues lysine 690–asparagine 692 are Cytoplasmic-facing. The helical transmembrane segment at tyrosine 693–valine 713 threads the bilayer. At histidine 714 to leucine 976 the chain is on the vacuolar side. Residues asparagine 768, asparagine 796, asparagine 811, asparagine 866, and asparagine 937 are each glycosylated (N-linked (GlcNAc...) asparagine).

Belongs to the peptidase M28 family. Zn(2+) is required as a cofactor.

It localises to the vacuole membrane. May be involved in vacuolar sorting and osmoregulation. In Saccharomyces cerevisiae (strain JAY291) (Baker's yeast), this protein is Vacuolar membrane protease.